The primary structure comprises 199 residues: MAHSQLLSSEERLFCYRWFHSLLAKELSEPQLQALQAGQFASFFALLAELGFQPQVTDLQNELAKLTAYDSPRLELAADFAQCFLLEGKLSALPYASYYLDERDLSENLAVMDQWLTKFQLKINRLHNEPSDHLCIYLEVLIKLIETEQPVQVQQQFIRQQLLGWLPQWAEKTAQIHSSTAFYQIISNLLLGFLQQDIA.

This sequence belongs to the TorD/DmsD family. TorD subfamily.

It localises to the cytoplasm. Involved in the biogenesis of TorA. Acts on TorA before the insertion of the molybdenum cofactor and, as a result, probably favors a conformation of the apoenzyme that is competent for acquiring the cofactor. This is Chaperone protein TorD from Actinobacillus pleuropneumoniae serotype 7 (strain AP76).